A 630-amino-acid chain; its full sequence is PAN2-PAN3 deadenylation complex subunit PAN3 (630 aa).

The C3H1-type zinc-finger motif lies at 7–36 (SAKDTLCKNILIYGYCKFENKGCAFSHHKP). 2 disordered regions span residues 38–72 (VGQPPVSASSSSGYSGNSSPAEAKRKFNLNTPSFQ) and 135–171 (GFGSEYPSSPNTSGAGQPPNPYLTGNGHPASMAQSSG). A compositionally biased stretch (low complexity) spans 44–56 (SASSSSGYSGNSS). Polar residues predominate over residues 140 to 149 (YPSSPNTSGA). A pseudokinase domain region spans residues 231–501 (QTLPRSNLPE…LDRFSQRYLT (271 aa)). Residues R283, 333–340 (DYFPNSST), and 388–389 (TK) contribute to the ATP site. Positions 502–540 (TRLFSTINNLEDSTDFMESQITTELENARLFRLLTKLNF) form a coiled coil. Residues 541–630 (IIDRPEAKDW…DSVFRNLTRD (90 aa)) are knob domain.

It belongs to the protein kinase superfamily. PAN3 family. In terms of assembly, homodimer. Forms a heterotrimer with a catalytic subunit PAN2 to form the poly(A)-nuclease (PAN) deadenylation complex. Interacts (via PAM-2 motif) with poly(A)-binding protein PAB1 (via PABC domain), conferring substrate specificity of the enzyme complex.

The protein resides in the cytoplasm. Regulatory subunit of the poly(A)-nuclease (PAN) deadenylation complex, one of two cytoplasmic mRNA deadenylases involved in mRNA turnover. PAN specifically shortens poly(A) tails of RNA and the activity is stimulated by poly(A)-binding protein PAB1. PAN deadenylation is followed by rapid degradation of the shortened mRNA tails by the CCR4-NOT complex. Deadenylated mRNAs are then degraded by two alternative mechanisms, namely exosome-mediated 3'-5' exonucleolytic degradation, or deadenylation-dependent mRNA decaping and subsequent 5'-3' exonucleolytic degradation by XRN1. May also be involved in post-transcriptional maturation of mRNA poly(A) tails. PAN3 acts as a positive regulator for PAN activity, recruiting the catalytic subunit PAN2 to mRNA via its interaction with RNA and with PAB1. The chain is PAN2-PAN3 deadenylation complex subunit PAN3 from Scheffersomyces stipitis (strain ATCC 58785 / CBS 6054 / NBRC 10063 / NRRL Y-11545) (Yeast).